The following is a 142-amino-acid chain: ATP synthase epsilon chain (142 aa).

The protein belongs to the ATPase epsilon chain family. F-type ATPases have 2 components, CF(1) - the catalytic core - and CF(0) - the membrane proton channel. CF(1) has five subunits: alpha(3), beta(3), gamma(1), delta(1), epsilon(1). CF(0) has three main subunits: a, b and c.

It localises to the cell inner membrane. In terms of biological role, produces ATP from ADP in the presence of a proton gradient across the membrane. This chain is ATP synthase epsilon chain, found in Shewanella halifaxensis (strain HAW-EB4).